We begin with the raw amino-acid sequence, 1015 residues long: Beta-galactosidase (1015 aa).

Catalysis depends on glutamate 434, which acts as the Proton donor. The Nucleophile role is filled by glutamate 513.

This sequence belongs to the glycosyl hydrolase 2 family. Requires Mg(2+) as cofactor. Mn(2+) is required as a cofactor.

The enzyme catalyses Hydrolysis of terminal non-reducing beta-D-galactose residues in beta-D-galactosides.. The protein is Beta-galactosidase (lacZ) of Arthrobacter sp. (strain B7).